The sequence spans 153 residues: MATKIRLKRQGKKFYAFYRVVVVDSRKKRDGKVIEEIGIYNPNTQPSTIQIKSDRAQYWLGVGAQPSEPVFKLLNITGDWQKYKGLEGAEGTLKTVEAGPDAEARIAAVENQAQKLKAAKSEAAAKAKAEAEAAAAAEEAPAEEAAEEAPAEA.

The interval 130–153 (EAEAAAAAEEAPAEEAAEEAPAEA) is disordered. Acidic residues predominate over residues 140–153 (APAEEAAEEAPAEA).

The protein belongs to the bacterial ribosomal protein bS16 family.

The protein is Small ribosomal subunit protein bS16 of Bifidobacterium longum subsp. infantis (strain ATCC 15697 / DSM 20088 / JCM 1222 / NCTC 11817 / S12).